The sequence spans 1678 residues: Anaphase-promoting complex subunit 1 (1678 aa).

PC repeat units follow at residues 1089–1116 (SAGFSLGLVALGRGGDALGSMDSLVNRL), 1156–1194 (GAIIALTLMYLKTESEVIFSKLSIPQTHYDLECVRPDFI), 1256–1293 (GACISLGLRFAGTRDGNARDLLNSYALYLLNEIKPLSA), and 1320–1354 (IISLSVVMAGSGDLQVFRLLRFLRSRNSADGHANY).

Belongs to the APC1 family. In terms of assembly, the APC/C is composed of at least 10 subunits.

The protein resides in the nucleus. Its pathway is protein modification; protein ubiquitination. In terms of biological role, component of the anaphase promoting complex/cyclosome (APC/C), a cell cycle-regulated E3 ubiquitin-protein ligase complex that controls progression through mitosis and the G1 phase of the cell cycle. The APC/C complex controls several key steps in the cell cycle by mediating ubiquitination and subsequent degradation of target proteins such as cyclins. The APC/C complex is required for the female gametophyte development and is involved in several aspect of development by controlling cell division and cell elongation. Involved in the control of endoreduplication. This chain is Anaphase-promoting complex subunit 1 (APC1), found in Arabidopsis thaliana (Mouse-ear cress).